The sequence spans 227 residues: Charged multivesicular body protein 4c (227 aa).

Residues methionine 1 to glutamine 27 form a disordered region. 2 coiled-coil regions span residues lysine 32–glutamate 94 and leucine 129–valine 187. Residues glutamate 178 to threonine 227 form a disordered region. Positions leucine 189 to proline 206 are enriched in low complexity.

Belongs to the SNF7 family. As to quaternary structure, probable core component of the endosomal sorting required for transport complex III (ESCRT-III). ESCRT-III components are thought to multimerize to form a flat lattice on the perimeter membrane of the endosome.

The protein resides in the cytoplasm. It is found in the cytosol. The protein localises to the late endosome membrane. Functionally, probable core component of the endosomal sorting required for transport complex III (ESCRT-III) which is involved in multivesicular bodies (MVBs) formation and sorting of endosomal cargo proteins into MVBs. MVBs contain intraluminal vesicles (ILVs) that are generated by invagination and scission from the limiting membrane of the endosome and mostly are delivered to lysosomes enabling degradation of membrane proteins, such as stimulated growth factor receptors, lysosomal enzymes and lipids. Key component of the cytokinesis checkpoint, a process required to delay abscission to prevent both premature resolution of intercellular chromosome bridges and accumulation of DNA damage. This is Charged multivesicular body protein 4c (chmp4c) from Xenopus laevis (African clawed frog).